The chain runs to 415 residues: Serine--tRNA ligase (415 aa).

An L-serine-binding site is contributed by 231–233 (TAE). 262–264 (RSE) serves as a coordination point for ATP. Position 285 (Glu-285) interacts with L-serine. 349–352 (EISS) is a binding site for ATP. Residue Ser-383 participates in L-serine binding.

The protein belongs to the class-II aminoacyl-tRNA synthetase family. Type-1 seryl-tRNA synthetase subfamily. Homodimer. The tRNA molecule binds across the dimer.

The protein resides in the cytoplasm. The catalysed reaction is tRNA(Ser) + L-serine + ATP = L-seryl-tRNA(Ser) + AMP + diphosphate + H(+). It catalyses the reaction tRNA(Sec) + L-serine + ATP = L-seryl-tRNA(Sec) + AMP + diphosphate + H(+). The protein operates within aminoacyl-tRNA biosynthesis; selenocysteinyl-tRNA(Sec) biosynthesis; L-seryl-tRNA(Sec) from L-serine and tRNA(Sec): step 1/1. Catalyzes the attachment of serine to tRNA(Ser). Is also able to aminoacylate tRNA(Sec) with serine, to form the misacylated tRNA L-seryl-tRNA(Sec), which will be further converted into selenocysteinyl-tRNA(Sec). The protein is Serine--tRNA ligase of Helicobacter pylori (strain P12).